Reading from the N-terminus, the 696-residue chain is DNA ligase (696 aa).

NAD(+) contacts are provided by residues 36 to 40, 85 to 86, and Glu-123; these read DAEYD and SL. The active-site N6-AMP-lysine intermediate is Lys-125. NAD(+) contacts are provided by Arg-146, Glu-181, Lys-319, and Lys-343. Cys-437, Cys-440, Cys-455, and Cys-461 together coordinate Zn(2+). Residues 618–696 enclose the BRCT domain; the sequence is PEGTSLAGKT…EDGLKALLGL (79 aa).

The protein belongs to the NAD-dependent DNA ligase family. LigA subfamily. The cofactor is Mg(2+). Mn(2+) is required as a cofactor.

The enzyme catalyses NAD(+) + (deoxyribonucleotide)n-3'-hydroxyl + 5'-phospho-(deoxyribonucleotide)m = (deoxyribonucleotide)n+m + AMP + beta-nicotinamide D-nucleotide.. DNA ligase that catalyzes the formation of phosphodiester linkages between 5'-phosphoryl and 3'-hydroxyl groups in double-stranded DNA using NAD as a coenzyme and as the energy source for the reaction. It is essential for DNA replication and repair of damaged DNA. The polypeptide is DNA ligase (Bordetella parapertussis (strain 12822 / ATCC BAA-587 / NCTC 13253)).